The primary structure comprises 139 residues: Acidic phospholipase A2 Tgc-E6 (139 aa).

A signal peptide spans 1-16; the sequence is MRTLWIMAVLLLGVEG. Cystine bridges form between C42/C132, C44/C60, C59/C111, C65/C139, C66/C104, C73/C97, and C91/C102. Residues Y43, G45, and G47 each contribute to the Ca(2+) site. Residue H63 is part of the active site. D64 contacts Ca(2+). Residue D105 is part of the active site.

Belongs to the phospholipase A2 family. Group II subfamily. D49 sub-subfamily. Monomer. The cofactor is Ca(2+). In terms of tissue distribution, expressed by the venom gland.

It localises to the secreted. The catalysed reaction is a 1,2-diacyl-sn-glycero-3-phosphocholine + H2O = a 1-acyl-sn-glycero-3-phosphocholine + a fatty acid + H(+). Functionally, snake venom phospholipase A2 (PLA2) that inhibits the ADP-(IC(50)=272 nM) and collagen-induced (IC(50)=518 nM) human platelet aggregation in platelet rich plasma. Exhibits very high hydrolytic activities toward the synthetic lecithin, and prefers the anionic micelles (dPPC with deoxycholate) to the zwitterionic micelles (dPPC with Triton X-100). PLA2 catalyzes the calcium-dependent hydrolysis of the 2-acyl groups in 3-sn-phosphoglycerides. In Trimeresurus gracilis (Kikuchi habu), this protein is Acidic phospholipase A2 Tgc-E6.